The chain runs to 295 residues: Alpha-soluble NSF attachment protein (295 aa).

At M1 the chain carries N-acetylmethionine. A phosphoserine mark is found at S26, S29, and S195.

This sequence belongs to the SNAP family. In terms of assembly, interacts with PRKCABP, and disrupts the interaction between GRIA2 and PRKCABP, leading to the internalization of GRIA2. Found in a complex with VAMP8. Component of a SNARE-like complex that contains at least ZW10, USE1L, RINT1, STX18 and NAPA/SNAP-alpha. Interacts with VTI1A. Interacts with STX12. Interacts with GNA12 (via N-terminus); the interaction promotes CDH5 localization to plasma membrane.

It localises to the cell membrane. In terms of biological role, required for vesicular transport between the endoplasmic reticulum and the Golgi apparatus. Together with GNA12 promotes CDH5 localization to plasma membrane. This chain is Alpha-soluble NSF attachment protein (Napa), found in Mus musculus (Mouse).